Consider the following 522-residue polypeptide: Calcium-dependent protein kinase 4 (522 aa).

Over residues 1–10 (MGACFSSHTA) the composition is skewed to polar residues. A disordered region spans residues 1–43 (MGACFSSHTATAAADGGSGKRQQRKGDHKGKLPDGGGGEKEKE). A lipid anchor (N-myristoyl glycine) is attached at G2. Positions 29–43 (KGKLPDGGGGEKEKE) are enriched in basic and acidic residues. One can recognise a Protein kinase domain in the interval 59-319 (YQVGRLLGHG…AAQALSHPWV (261 aa)). Residues 65–73 (LGHGQFGYT) and K88 contribute to the ATP site. The active-site Proton acceptor is the D185. The tract at residues 325-355 (ASEIPVDISVLSNMRQFVKYSRFKQFALRAL) is autoinhibitory domain. EF-hand domains lie at 362–397 (EELA…DLPW), 399–434 (LKGP…IHQM), 441–476 (RWGL…GLKG), and 481–508 (LLEE…ASMS). Positions 375, 377, 379, 381, 386, 412, 414, 416, 423, 454, 456, 458, 460, 465, 486, 488, 490, 492, and 497 each coordinate Ca(2+).

Belongs to the protein kinase superfamily. Ser/Thr protein kinase family. CDPK subfamily.

It is found in the membrane. The catalysed reaction is L-seryl-[protein] + ATP = O-phospho-L-seryl-[protein] + ADP + H(+). It catalyses the reaction L-threonyl-[protein] + ATP = O-phospho-L-threonyl-[protein] + ADP + H(+). With respect to regulation, activated by calcium. Autophosphorylation may play an important role in the regulation of the kinase activity. In terms of biological role, may play a role in signal transduction pathways that involve calcium as a second messenger. The chain is Calcium-dependent protein kinase 4 from Oryza sativa subsp. japonica (Rice).